The chain runs to 74 residues: YTDCKLAASGLGEEAESSEQSPSPTQLFPWMRPQAAAGRRRGRQTYSRYQTLELEKEFLFNPYLTRKRRIEVSR.

The span at 1 to 24 (YTDCKLAASGLGEEAESSEQSPSP) shows a compositional bias: low complexity. The tract at residues 1–28 (YTDCKLAASGLGEEAESSEQSPSPTQLF) is disordered. The Antp-type hexapeptide signature appears at 27–32 (LFPWMR). A DNA-binding region (homeobox) is located at residues 39 to 74 (RRRGRQTYSRYQTLELEKEFLFNPYLTRKRRIEVSR).

The protein belongs to the Antp homeobox family.

Its subcellular location is the nucleus. Functionally, sequence-specific transcription factor which is part of a developmental regulatory system that provides cells with specific positional identities on the anterior-posterior axis. The chain is Homeobox protein Hox-B8 (HOXB8) from Gallus gallus (Chicken).